A 261-amino-acid polypeptide reads, in one-letter code: MRIALGIEYDGSGYFGWQRQAEVDSVQGQLEQALSKVANEPISLFCAGRTDAGVHATGQVVHFETNAIRNEGAWTLGVNANLPDNIAVRWAKEVDDSFHARFSATARRYRYVIYNHNFRPGILRHGVSHYHGDIDADKMHVAAQALLGEQDFTSFRAIQCQSKTPFRNVHSVKVTRQGMYVIVDISANAFLHHMVRNIVGSLLEIGLGNQPLTWMADLLALKDRNQAAATAKPNGLYLVDVTYPEQYQLPKLALGPLFMLD.

D51 acts as the Nucleophile in catalysis. Y109 contacts substrate.

It belongs to the tRNA pseudouridine synthase TruA family. As to quaternary structure, homodimer.

The enzyme catalyses uridine(38/39/40) in tRNA = pseudouridine(38/39/40) in tRNA. Its function is as follows. Formation of pseudouridine at positions 38, 39 and 40 in the anticodon stem and loop of transfer RNAs. This Shewanella sp. (strain MR-7) protein is tRNA pseudouridine synthase A.